Consider the following 64-residue polypeptide: MLCLPVFIILLLLASPAAPNPLQTRIQSNLIRAGPEDANMKTDKRVISGLLAGILVPLIDAIMG.

Positions 1–19 (MLCLPVFIILLLLASPAAP) are cleaved as a signal peptide. A propeptide spanning residues 20-43 (NPLQTRIQSNLIRAGPEDANMKTD) is cleaved from the precursor. Methionine amide is present on methionine 63.

The protein belongs to the conotoxin T superfamily. As to expression, expressed by the venom duct.

The protein resides in the secreted. The sequence is that of Conotoxin VnMLCL-042 from Conus ventricosus (Mediterranean cone).